Consider the following 387-residue polypeptide: Anhydro-N-acetylmuramic acid kinase (387 aa).

9-16 (GTSVDGID) serves as a coordination point for ATP.

It belongs to the anhydro-N-acetylmuramic acid kinase family.

The enzyme catalyses 1,6-anhydro-N-acetyl-beta-muramate + ATP + H2O = N-acetyl-D-muramate 6-phosphate + ADP + H(+). Its pathway is amino-sugar metabolism; 1,6-anhydro-N-acetylmuramate degradation. It participates in cell wall biogenesis; peptidoglycan recycling. Functionally, catalyzes the specific phosphorylation of 1,6-anhydro-N-acetylmuramic acid (anhMurNAc) with the simultaneous cleavage of the 1,6-anhydro ring, generating MurNAc-6-P. Is required for the utilization of anhMurNAc either imported from the medium or derived from its own cell wall murein, and thus plays a role in cell wall recycling. The sequence is that of Anhydro-N-acetylmuramic acid kinase from Synechocystis sp. (strain ATCC 27184 / PCC 6803 / Kazusa).